The primary structure comprises 212 residues: Ribonuclease P protein component 3 (212 aa).

It belongs to the eukaryotic/archaeal RNase P protein component 3 family. In terms of assembly, consists of a catalytic RNA component and at least 5 protein subunits. Forms a heterotetrameric subcomplex with Rnp2. Reconstituted enzyme missing individual protein subunits is suboptimally active, showing each subunit contributes to optimization of activity.

The protein localises to the cytoplasm. The catalysed reaction is Endonucleolytic cleavage of RNA, removing 5'-extranucleotides from tRNA precursor.. Its function is as follows. Part of ribonuclease P, a protein complex that generates mature tRNA molecules by cleaving their 5'-ends. Not absolutely essential for activity in vitro, however it strongly stimulates activity. Binds RNase P RNA. The protein is Ribonuclease P protein component 3 of Pyrococcus horikoshii (strain ATCC 700860 / DSM 12428 / JCM 9974 / NBRC 100139 / OT-3).